Here is a 118-residue protein sequence, read N- to C-terminus: Large ribosomal subunit protein bL19 (118 aa).

Belongs to the bacterial ribosomal protein bL19 family.

Functionally, this protein is located at the 30S-50S ribosomal subunit interface and may play a role in the structure and function of the aminoacyl-tRNA binding site. This is Large ribosomal subunit protein bL19 from Salinispora arenicola (strain CNS-205).